A 140-amino-acid chain; its full sequence is MTLNNVARPDLCVSYKKIAPPKGLYSATPSISGVVNQSMPMAAIFLRNKFIAWFSLIQSVHYYLNTDEDIIVAYKENKAPSPMDQPPAIKLFMSLIGLCVCYMNLVFPQQIAQPSSSGSKGNTETTIETTTEVETETAKQ.

N36 is a glycosylation site (N-linked (GlcNAc...) asparagine). Residues 91 to 107 form a helical membrane-spanning segment; that stretch reads LFMSLIGLCVCYMNLVF. Polar residues predominate over residues 113-122; the sequence is QPSSSGSKGN. The tract at residues 113 to 140 is disordered; that stretch reads QPSSSGSKGNTETTIETTTEVETETAKQ. Acidic residues predominate over residues 131 to 140; that stretch reads TEVETETAKQ.

It is found in the endoplasmic reticulum membrane. This is an uncharacterized protein from Saccharomyces cerevisiae (strain ATCC 204508 / S288c) (Baker's yeast).